Consider the following 139-residue polypeptide: Putative nickel-responsive regulator (139 aa).

His79, His90, His92, and Cys98 together coordinate Ni(2+).

This sequence belongs to the transcriptional regulatory CopG/NikR family. The cofactor is Ni(2+).

Its function is as follows. Transcriptional regulator. The polypeptide is Putative nickel-responsive regulator (Nitratidesulfovibrio vulgaris (strain DSM 19637 / Miyazaki F) (Desulfovibrio vulgaris)).